Here is a 214-residue protein sequence, read N- to C-terminus: Isochorismatase family protein 2B (214 aa).

It belongs to the isochorismatase family.

The sequence is that of Isochorismatase family protein 2B from Dictyostelium discoideum (Social amoeba).